We begin with the raw amino-acid sequence, 245 residues long: uncharacterized protein (245 aa).

This is an uncharacterized protein from Bacillus subtilis (strain 168).